The sequence spans 67 residues: Large ribosomal subunit protein bL35 (67 aa).

Residues 1 to 16 (MPKMKTKSSAKKRFRV) show a composition bias toward basic residues. Residues 1 to 24 (MPKMKTKSSAKKRFRVRPGGTVKR) are disordered.

Belongs to the bacterial ribosomal protein bL35 family.

This Delftia acidovorans (strain DSM 14801 / SPH-1) protein is Large ribosomal subunit protein bL35.